The chain runs to 361 residues: Divinyl chlorophyll a/b light-harvesting protein PcbE (361 aa).

6 helical membrane-spanning segments follow: residues 27–47, 88–108, 149–169, 210–230, 250–270, and 315–335; these read FIGS…ANTL, VAFV…AGLL, FILG…VEWA, VMGG…FHIA, AVLS…AFWC, and LSNV…WHAI.

The protein belongs to the PsbB/PsbC family. IsiA/Pcb subfamily. The antenna complex consists of divinyl chlorophylls (a and b) and divinyl chlorophyll a/b binding proteins and binds more divinyl chlorophyll b than does the antenna complex from high-light-adapted Prochlorococcus. It depends on divinyl chlorophyll a as a cofactor. The cofactor is divinyl chlorophyll b.

The protein resides in the cellular thylakoid membrane. The antenna complex functions as a light receptor, it captures and delivers excitation energy to photosystems II and I. The Prochlorales pcb genes are not related to higher plant LHCs. The polypeptide is Divinyl chlorophyll a/b light-harvesting protein PcbE (pcbE) (Prochlorococcus marinus (strain SARG / CCMP1375 / SS120)).